The chain runs to 241 residues: Small ribosomal subunit protein bS6 (241 aa).

The segment covering 97–108 (KPKIRERNRKYT) has biased composition (basic residues). The interval 97–241 (KPKIRERNRK…YNNKKPQSSN (145 aa)) is disordered. Over residues 109 to 118 (LRRDRFDKPN) the composition is skewed to basic and acidic residues. Composition is skewed to low complexity over residues 130-151 (QDQQ…QASQ) and 161-182 (DDFQ…NQSG). The segment covering 183–193 (YHRENNRHNQE) has biased composition (basic and acidic residues). Residues 194–210 (NMHQNNKNHQNQTSQTQ) show a composition bias toward low complexity.

It belongs to the bacterial ribosomal protein bS6 family.

In terms of biological role, binds together with bS18 to 16S ribosomal RNA. This chain is Small ribosomal subunit protein bS6, found in Mesomycoplasma hyopneumoniae (strain J / ATCC 25934 / NCTC 10110) (Mycoplasma hyopneumoniae).